We begin with the raw amino-acid sequence, 114 residues long: MGRIKTKITILLVLLLLLAGGYMYINDIELKDVPTAIGQTLSSEEEEYTIQEYKVTKIDGSEYHGVAENGTKIIFNGKKLNQDLSDIKEGDKIKAYFSKSKRIDGLIKVAKVND.

This is an uncharacterized protein from Bacillus subtilis (strain 168).